Reading from the N-terminus, the 109-residue chain is MSDTEYLTRAEAVLAAVERTVDDANDGDHDIDLERNGSVLTLTFENGSKIIVNLQPPMKEVWIAAKAGGFHYRFIDGEWRDTRTGTEFFSALTEYATQQAGLPITFNAP.

It belongs to the frataxin family.

Functionally, involved in iron-sulfur (Fe-S) cluster assembly. May act as a regulator of Fe-S biogenesis. The polypeptide is Iron-sulfur cluster assembly protein CyaY (Burkholderia lata (strain ATCC 17760 / DSM 23089 / LMG 22485 / NCIMB 9086 / R18194 / 383)).